We begin with the raw amino-acid sequence, 346 residues long: UDP-3-O-acylglucosamine N-acyltransferase (346 aa).

His-253 functions as the Proton acceptor in the catalytic mechanism.

Belongs to the transferase hexapeptide repeat family. LpxD subfamily. In terms of assembly, homotrimer.

It catalyses the reaction a UDP-3-O-[(3R)-3-hydroxyacyl]-alpha-D-glucosamine + a (3R)-hydroxyacyl-[ACP] = a UDP-2-N,3-O-bis[(3R)-3-hydroxyacyl]-alpha-D-glucosamine + holo-[ACP] + H(+). It functions in the pathway bacterial outer membrane biogenesis; LPS lipid A biosynthesis. Its function is as follows. Catalyzes the N-acylation of UDP-3-O-acylglucosamine using 3-hydroxyacyl-ACP as the acyl donor. Is involved in the biosynthesis of lipid A, a phosphorylated glycolipid that anchors the lipopolysaccharide to the outer membrane of the cell. This chain is UDP-3-O-acylglucosamine N-acyltransferase, found in Rickettsia peacockii (strain Rustic).